Here is a 117-residue protein sequence, read N- to C-terminus: Phosphoribosyl-ATP pyrophosphatase (117 aa).

A compositionally biased stretch (basic and acidic residues) spans 96 to 105 (GVSGIEEKLS). The interval 96 to 117 (GVSGIEEKLSRSQNQPEPTKAE) is disordered. Residues 106-117 (RSQNQPEPTKAE) are compositionally biased toward polar residues.

This sequence belongs to the PRA-PH family.

It is found in the cytoplasm. The enzyme catalyses 1-(5-phospho-beta-D-ribosyl)-ATP + H2O = 1-(5-phospho-beta-D-ribosyl)-5'-AMP + diphosphate + H(+). Its pathway is amino-acid biosynthesis; L-histidine biosynthesis; L-histidine from 5-phospho-alpha-D-ribose 1-diphosphate: step 2/9. In Nitrosomonas eutropha (strain DSM 101675 / C91 / Nm57), this protein is Phosphoribosyl-ATP pyrophosphatase.